The primary structure comprises 97 residues: Acylphosphatase-2 (97 aa).

Position 2 is an N-acetylalanine (alanine 2). The 91-residue stretch at 7–97 (SVDYEVFGTV…LEYSNFSIRY (91 aa)) folds into the Acylphosphatase-like domain. Active-site residues include arginine 22 and asparagine 40. Position 91 is a phosphoserine (serine 91).

Belongs to the acylphosphatase family.

The enzyme catalyses an acyl phosphate + H2O = a carboxylate + phosphate + H(+). In terms of biological role, its physiological role is not yet clear. This Rattus norvegicus (Rat) protein is Acylphosphatase-2 (Acyp2).